Here is a 592-residue protein sequence, read N- to C-terminus: Bifunctional enzyme BirA/CoaX (592 aa).

Positions 1-329 are biotin--protein ligase; the sequence is MTVLKLSHWR…ISLRSDDRPV (329 aa). Residues 83-259 enclose the BPL/LPL catalytic domain; that stretch reads QTALKHECAS…ELDAVLLQYA (177 aa). Positions 336-592 are type III pantothenate kinase; that stretch reads DSERFLLLDG…AAEGREYEHI (257 aa). 344-351 serves as a coordination point for ATP; sequence DGGNSRLK. Substrate contacts are provided by residues Tyr-426 and 433–436; that span reads GSDR. The Proton acceptor role is filled by Asp-435. Thr-458 contributes to the ATP binding site. Position 508 (Thr-508) interacts with substrate.

The protein in the N-terminal section; belongs to the biotin--protein ligase family. This sequence in the C-terminal section; belongs to the type III pantothenate kinase family. NH4(+) serves as cofactor. K(+) is required as a cofactor.

It localises to the cytoplasm. It catalyses the reaction biotin + L-lysyl-[protein] + ATP = N(6)-biotinyl-L-lysyl-[protein] + AMP + diphosphate + H(+). The enzyme catalyses (R)-pantothenate + ATP = (R)-4'-phosphopantothenate + ADP + H(+). It functions in the pathway cofactor biosynthesis; coenzyme A biosynthesis; CoA from (R)-pantothenate: step 1/5. Its function is as follows. Activates biotin to form biotinyl-5'-adenylate and transfers the biotin moiety to biotin-accepting proteins. In terms of biological role, catalyzes the phosphorylation of pantothenate (Pan), the first step in CoA biosynthesis. This Neisseria meningitidis serogroup B (strain ATCC BAA-335 / MC58) protein is Bifunctional enzyme BirA/CoaX (birA/coaX).